The following is a 444-amino-acid chain: Homogentisate 1,2-dioxygenase (444 aa).

The Proton acceptor role is filled by His298. Positions 341 and 347 each coordinate Fe cation. Homogentisate is bound by residues Tyr356 and His377. His377 contacts Fe cation.

The protein belongs to the homogentisate dioxygenase family. As to quaternary structure, hexamer; dimer of trimers. Fe cation serves as cofactor.

It catalyses the reaction homogentisate + O2 = 4-maleylacetoacetate + H(+). The protein operates within amino-acid degradation; L-phenylalanine degradation; acetoacetate and fumarate from L-phenylalanine: step 4/6. In terms of biological role, involved in the catabolism of homogentisate (2,5-dihydroxyphenylacetate or 2,5-OH-PhAc), a central intermediate in the degradation of phenylalanine and tyrosine. Catalyzes the oxidative ring cleavage of the aromatic ring of homogentisate to yield maleylacetoacetate. The sequence is that of Homogentisate 1,2-dioxygenase from Burkholderia ambifaria (strain MC40-6).